A 225-amino-acid polypeptide reads, in one-letter code: MENQPKLNSSKEVIAFLAERFPQCFSAEGEARPLKIGIFQDLVERVGGEMNLSKTQLRAALRLYTSSWRYLYGVKAGAIRVDLDGNPCGELEEQHIAHARQQLEEAKARVQAQRAAQQAKKREAAAAAGQQDEGVRRERKPRPQQPRRKEGAEQRKPRPVAAKAPREERLTPVSDVSVLTVGQALKVKAGNNAMDATVLEITKDGVRVQLTSGMSMIVRAEHLVF.

A disordered region spans residues 107–169; the sequence is KARVQAQRAA…VAAKAPREER (63 aa). The span at 109–118 shows a compositional bias: low complexity; that stretch reads RVQAQRAAQQ. The span at 137–146 shows a compositional bias: basic residues; sequence RERKPRPQQP. Over residues 147–156 the composition is skewed to basic and acidic residues; that stretch reads RRKEGAEQRK.

This sequence belongs to the ProQ family.

It localises to the cytoplasm. Its function is as follows. RNA chaperone with significant RNA binding, RNA strand exchange and RNA duplexing activities. May regulate ProP activity through an RNA-based, post-transcriptional mechanism. This chain is RNA chaperone ProQ, found in Klebsiella pneumoniae subsp. pneumoniae (strain ATCC 700721 / MGH 78578).